Here is a 131-residue protein sequence, read N- to C-terminus: Small ribosomal subunit protein uS8 (131 aa).

This sequence belongs to the universal ribosomal protein uS8 family. In terms of assembly, part of the 30S ribosomal subunit. Contacts proteins S5 and S12.

Functionally, one of the primary rRNA binding proteins, it binds directly to 16S rRNA central domain where it helps coordinate assembly of the platform of the 30S subunit. The sequence is that of Small ribosomal subunit protein uS8 from Bordetella avium (strain 197N).